The following is a 106-amino-acid chain: A-type ATP synthase subunit F (106 aa).

This sequence belongs to the V-ATPase F subunit family. In terms of assembly, has multiple subunits with at least A(3), B(3), C, D, E, F, H, I and proteolipid K(x).

It localises to the cell membrane. Functionally, component of the A-type ATP synthase that produces ATP from ADP in the presence of a proton gradient across the membrane. This is A-type ATP synthase subunit F from Methanosphaera stadtmanae (strain ATCC 43021 / DSM 3091 / JCM 11832 / MCB-3).